Reading from the N-terminus, the 188-residue chain is Hypoxanthine/guanine phosphoribosyltransferase (188 aa).

This sequence belongs to the purine/pyrimidine phosphoribosyltransferase family. Archaeal HPRT subfamily. Homodimer.

It localises to the cytoplasm. The enzyme catalyses IMP + diphosphate = hypoxanthine + 5-phospho-alpha-D-ribose 1-diphosphate. The catalysed reaction is GMP + diphosphate = guanine + 5-phospho-alpha-D-ribose 1-diphosphate. Its pathway is purine metabolism; IMP biosynthesis via salvage pathway; IMP from hypoxanthine: step 1/1. Functionally, catalyzes a salvage reaction resulting in the formation of IMP that is energically less costly than de novo synthesis. The chain is Hypoxanthine/guanine phosphoribosyltransferase from Methanobrevibacter ruminantium (strain ATCC 35063 / DSM 1093 / JCM 13430 / OCM 146 / M1) (Methanobacterium ruminantium).